The primary structure comprises 142 residues: Coiled-coil-helix-coiled-coil-helix domain-containing protein 10, mitochondrial (142 aa).

Residues methionine 1–proline 16 constitute a mitochondrion transit peptide. Residues methionine 1–serine 20 show a composition bias toward low complexity. 2 disordered regions span residues methionine 1–methionine 45 and alanine 68–leucine 97. The segment covering alanine 21–serine 39 has biased composition (pro residues). A compositionally biased stretch (low complexity) spans proline 80–threonine 90. The region spanning methionine 99–serine 140 is the CHCH domain. 2 short sequence motifs (cx9C motif) span residues cysteine 102–cysteine 112 and cysteine 122–cysteine 132. Disulfide bonds link cysteine 102–cysteine 132 and cysteine 112–cysteine 122.

In terms of tissue distribution, ubiquitously expressed. Higher expression is observed in heart and liver.

The protein localises to the mitochondrion intermembrane space. In terms of biological role, may be involved in the maintenance of mitochondrial organization and mitochondrial cristae structure. The protein is Coiled-coil-helix-coiled-coil-helix domain-containing protein 10, mitochondrial (CHCHD10) of Homo sapiens (Human).